A 115-amino-acid chain; its full sequence is Regulator of ribonuclease activity B (115 aa).

This sequence belongs to the RraB family. Interacts with the C-terminal region of Rne.

The protein resides in the cytoplasm. In terms of biological role, globally modulates RNA abundance by binding to RNase E (Rne) and regulating its endonucleolytic activity. Can modulate Rne action in a substrate-dependent manner by altering the composition of the degradosome. In Aeromonas salmonicida (strain A449), this protein is Regulator of ribonuclease activity B.